Consider the following 199-residue polypeptide: Thymidylate kinase (199 aa).

7 to 14 (GTEGVGKT) provides a ligand contact to ATP.

Belongs to the thymidylate kinase family.

It carries out the reaction dTMP + ATP = dTDP + ADP. Functionally, phosphorylation of dTMP to form dTDP in both de novo and salvage pathways of dTTP synthesis. The chain is Thymidylate kinase from Acinetobacter baumannii (strain AB307-0294).